The primary structure comprises 323 residues: Sphingolipid delta(4)-desaturase/C4-monooxygenase DES2 (323 aa).

Gly2 carries N-myristoyl glycine lipidation. 2 helical membrane-spanning segments follow: residues Trp45–Ala65 and Trp68–Ile88. The short motif at His89 to His93 is the Histidine box-1 element. A required for C4-hydroxylase activity region spans residues Thr95–Thr99. The short motif at His128 to His132 is the Histidine box-2 element. The helical transmembrane segment at Met209–Ala231 threads the bilayer. Positions His259–His263 match the Histidine box-3 motif.

Belongs to the fatty acid desaturase type 1 family. DEGS subfamily.

The protein localises to the endoplasmic reticulum membrane. It catalyses the reaction a dihydroceramide + 2 Fe(II)-[cytochrome b5] + O2 + 2 H(+) = a phytoceramide + 2 Fe(III)-[cytochrome b5] + H2O. The catalysed reaction is an N-acylsphinganine + 2 Fe(II)-[cytochrome b5] + O2 + 2 H(+) = an N-acylsphing-4-enine + 2 Fe(III)-[cytochrome b5] + 2 H2O. It carries out the reaction N-octanoylsphinganine + 2 Fe(II)-[cytochrome b5] + O2 + 2 H(+) = N-octanoyl-4-hydroxysphinganine + 2 Fe(III)-[cytochrome b5] + H2O. The enzyme catalyses an N-acylsphinganine + 2 Fe(II)-[cytochrome b5] + O2 + 2 H(+) = an N-acyl-(4R)-4-hydroxysphinganine + 2 Fe(III)-[cytochrome b5] + H2O. It participates in membrane lipid metabolism; sphingolipid biosynthesis. Its function is as follows. Bifunctional enzyme which acts both as a sphingolipid delta(4)-desaturase and a sphingolipid C4-monooxygenase. This Bos taurus (Bovine) protein is Sphingolipid delta(4)-desaturase/C4-monooxygenase DES2.